Reading from the N-terminus, the 475-residue chain is ATP synthase subunit beta (475 aa).

156-163 (GGAGVGKT) lines the ATP pocket.

The protein belongs to the ATPase alpha/beta chains family. As to quaternary structure, F-type ATPases have 2 components, CF(1) - the catalytic core - and CF(0) - the membrane proton channel. CF(1) has five subunits: alpha(3), beta(3), gamma(1), delta(1), epsilon(1). CF(0) has three main subunits: a(1), b(2) and c(9-12). The alpha and beta chains form an alternating ring which encloses part of the gamma chain. CF(1) is attached to CF(0) by a central stalk formed by the gamma and epsilon chains, while a peripheral stalk is formed by the delta and b chains.

The protein resides in the cell membrane. The enzyme catalyses ATP + H2O + 4 H(+)(in) = ADP + phosphate + 5 H(+)(out). In terms of biological role, produces ATP from ADP in the presence of a proton gradient across the membrane. The catalytic sites are hosted primarily by the beta subunits. The chain is ATP synthase subunit beta from Mycoplasma pneumoniae (strain ATCC 29342 / M129 / Subtype 1) (Mycoplasmoides pneumoniae).